We begin with the raw amino-acid sequence, 372 residues long: Glutamate 5-kinase (372 aa).

Residue Lys14 coordinates ATP. Residues Ser54, Asp141, and Asn153 each coordinate substrate. 173 to 174 (TD) is an ATP binding site. A PUA domain is found at 280–358 (RGTLVLDDGA…DAIEALLGYV (79 aa)).

The protein belongs to the glutamate 5-kinase family.

The protein localises to the cytoplasm. It catalyses the reaction L-glutamate + ATP = L-glutamyl 5-phosphate + ADP. The protein operates within amino-acid biosynthesis; L-proline biosynthesis; L-glutamate 5-semialdehyde from L-glutamate: step 1/2. Functionally, catalyzes the transfer of a phosphate group to glutamate to form L-glutamate 5-phosphate. This Pseudomonas paraeruginosa (strain DSM 24068 / PA7) (Pseudomonas aeruginosa (strain PA7)) protein is Glutamate 5-kinase.